A 448-amino-acid chain; its full sequence is C4-dicarboxylate transport protein (448 aa).

A run of 9 helical transmembrane segments spans residues 9–29, 59–79, 91–111, 159–179, 203–223, 237–257, 312–332, 345–365, and 367–387; these read SLYF…HFYP, LIKM…IAGM, VALL…LLVI, AFAN…GFAL, IVNM…AFTI, LIIC…GTIS, GYSF…IFIA, ITLL…TGSG, and IVMA…LALI.

It belongs to the dicarboxylate/amino acid:cation symporter (DAACS) (TC 2.A.23) family.

Its subcellular location is the cell inner membrane. Responsible for the transport of dicarboxylates such as succinate, fumarate, and malate from the periplasm across the membrane. This Acinetobacter baylyi (strain ATCC 33305 / BD413 / ADP1) protein is C4-dicarboxylate transport protein.